The sequence spans 348 residues: Methylthioribose-1-phosphate isomerase (348 aa).

Substrate contacts are provided by residues 47–49 (RGA), Arg90, and Gln196. Residue Asp237 is the Proton donor of the active site. Residue 247–248 (NK) participates in substrate binding.

This sequence belongs to the eIF-2B alpha/beta/delta subunits family. MtnA subfamily.

The catalysed reaction is 5-(methylsulfanyl)-alpha-D-ribose 1-phosphate = 5-(methylsulfanyl)-D-ribulose 1-phosphate. It participates in amino-acid biosynthesis; L-methionine biosynthesis via salvage pathway; L-methionine from S-methyl-5-thio-alpha-D-ribose 1-phosphate: step 1/6. Catalyzes the interconversion of methylthioribose-1-phosphate (MTR-1-P) into methylthioribulose-1-phosphate (MTRu-1-P). In Synechococcus sp. (strain ATCC 27144 / PCC 6301 / SAUG 1402/1) (Anacystis nidulans), this protein is Methylthioribose-1-phosphate isomerase.